We begin with the raw amino-acid sequence, 2346 residues long: MPSIVIDDADRLRQLWTQLVTDVTPSHLPSGLFSKRETKSTVGRLNVPMQLSAIYDCCQQCDVSPLNVVQAAWTAVLRSYSGADNVMFAGIGMNPRSTKQQWTNTSVSLARLEQDSSVISVLDTTQEEGLLQAESMVSVPEALDIFSSLEPKPCNSAIWLKDAQSKSELSLTDVVNEKTFDYAVQIDASLTQLDLVFHKPTVSRSQAQYIASTFADYLQSVCLDPYQTASTVCHPSELDMMQIDTWNRILPKGSEVCVDQLIESAAQKSPDAQALVGWDGEMSYSQFNQAANKMAAYFDSVGVQRGELVPICFEKSVWTIVTMIGLWKLGAGWVPLDPKHPRQRLETIIESVGARTVIASASNKDLVQDIASQVLILDPSQIQSAPEVDFKSRSQPHDTSFVMFTSGSTGKPKGVVHDHASVASSALNHASAMNISNNTRALQFGAYTFIISTFEIFTTLIFGGCLCIPSDHDRHTDIRPAIRSFEANWAIFTPSFARSLHHEDIPSLDTLLVAGEAVAQDIIDRWAPVAQLINIYGASECSVVMIGRMVADTPRSCIGRATGGLSWLVDPNDHDRLVPIGSVGELVIEGPILARGYLADPEKTQAVYIENPVWASQSGNTRRFYKTGDLARYGDDGRVHLIGRKDLQVKIRGQRVELTEIEAHMRAIDNSVKTAVAMVRPGGKAMLAAFISNQSGFGPEFPHPFYSAPDDKQSVVSLAGQMSKKLTLQLPPYMIPSVFLPLAYMPLTASGKTDRRLIASFGDSLTLTELAAVAGNGKVTERRMPTTTTEMTLRQIWAEILHCPVDEIGAEDNFFHLGGDSIEAMNLTRRCRAEGFQLQVGDILGNLVLSDMAKAMTSTRSLKPSITTPFELLGDDTDAVRANILSATGLPAGLLQDAYPCSPLQMGLMALSAKIPGSYVARHTLELPSSVTVGRFKEVWGMIVESNDVLRTRIVETDEYGSVQVVNRAPLVWAHDTDLAKYIELDEKIPMQIGDALAHFGIIAGPTNTFVLTIHHSIYDGMSLEMIFNDLVHAFEGVVPPVRTQFRDFIKEVVERNADKATEEYWRGEFAEGDMTTFPSLPSASHQPLANDSFVHTLQLNRKGPSDFTSATLIRAAWSLVQARYCDSPETVFGCTLSGRNAPVPGVEDVVGAVIATVPIKAKVDGEQPVAEWLQQINSHSVEMTPAQNYGLQNIARVAEGAAAACNFQSLLVIQPATSVAEDSIMQPFSAPQANFSTVALTLECSLAVDGSIQIHVHFDDTVLPRLEVQRIVRQFEHVLQQLASAPAGKLSDIEIISPQDKENLLQWNRDLAEPVNECVHRLISQNNFSQPNAPAICAWDGELTYTELESLSSKLAAHLINVGVGPDVFVPLCFEKSMWTIVAMLATLKAGGAFVAMDASQPISRMQSVVKDVNAQVVLYSEEQLSRAPGLAAKAIAVGPGMRELNTPRTPPTPVAPSNAAYVIFSSGSTGTPKGSVIEHRAFCTAAVSQKEGLQMGSRVLQFASYAFDASILEILSTLVQGGCVCVPSESERRGNIAEAITRMNVDWAVLTPSFVNTIDPSSVPTLSTLALAGEAMSAAHVAAWTPYVRLVNGYGPSECCVCTTSNRRVLPGTASNNIGTAVGSASWITDRDDHNKLAPIGAIGELLIEGNILARHYLNNPEKTDAAFITQPAWLPGHRSTRVYKTGDLVKYAPDGSILFIGRKDTQVKIRGQRVELGEIEYHLNLPADVSQSVVSYPKSGLYAQKLVGILELNSTAGSDLSVVPSAEFQRSGFQLSSLTHTLSETLPVHMIPVIWIVVRKIPSSSSTKIDRKVVDQWLTKLPSNFEPTLGITREGPTTSALRASEDKALAISKKIESLVNREDSPLHGRDFNISSMGIDSVQVISLASFIKQSYGVKVDVSRVLDGQMTVRGLAAFIDAELSGTVQEALPAFDAMKEASALVNDIIKNSMPQKTVFVTGGTGFLGTQILRQLCDRPDVGRVIAHVRANSPSDAFIRIKDAAVRAQWWSDYYLTKLDVWCGNLASPKLGLKPKQWASLSGESPNDGLVNGIIHAGAAVNWNAGTEILRAANVNSTAELIKAAISSPARPRLSYVSGGSRWSVGENDQDIANEIAHANGYAQTKYLSELLVKQFAAKYPNQFAIVKPGLILGTPEEGVANTDDFVWRLASGVVDACAFSDDYANAWMYVTSSTRVAEETIAQVFCPAGSMKTVTYMTEGITEREFWEIFHGELKYPLRKVDHETWMETMRKSIQKDTSSHPLWPVSQVFDALQGRLGGEPLQDASFVSPSQKQHVKATIRRNVQFLVEAGFIASPTGKKMKYMADKVFKRSGNVWENVKRMTITA.

The tract at residues 263-652 (ESAAQKSPDA…GRKDLQVKIR (390 aa)) is adenylation 1. Positions 784–860 (MPTTTTEMTL…DMAKAMTSTR (77 aa)) constitute a Carrier 1 domain. Ser821 carries the post-translational modification O-(pantetheine 4'-phosphoryl)serine. The interval 896–1306 (QDAYPCSPLQ…ISPQDKENLL (411 aa)) is condensation. An adenylation 2 region spans residues 1330–1713 (SQPNAPAICA…GRKDTQVKIR (384 aa)). Positions 1842 to 1924 (SALRASEDKA…GLAAFIDAEL (83 aa)) constitute a Carrier 2 domain. Ser1883 carries the post-translational modification O-(pantetheine 4'-phosphoryl)serine. The tract at residues 1960–2311 (VTGGTGFLGT…RNVQFLVEAG (352 aa)) is reductase (R) domain.

It belongs to the NRP synthetase family.

The enzyme catalyses benzoate + L-phenylalanine + 2 AH2 + 2 ATP = N-benzoyl-L-phenylalaninol + 2 A + 2 AMP + 2 diphosphate + H(+). Its pathway is secondary metabolite biosynthesis. Nonribosomal peptide synthase; part of the gene cluster that mediates the biosynthesis of asperphenamate, a rare linear amino acid ester that exhibits antitumor activity towards a number of cell lines. The structure of asperphenamate contains two subunits, N-benzoylphenylalanine and N-benzoylphenylalaninol, which are connected by an inter-molecular ester bond. The first step of asperphenamate biosynthesis is the generation of N-benzoylphenylalaninol by the nonribosomal peptide synthase apmA. Using phenylalanine and benzoic acid as substrates, apmA catalyzes amide bond formation and tethers the intermediate into the NRPS chain. Then, the terminal R domain of apmA catalyzes the reduction reaction to get the shunt product N-benzoylphenylalaninol. Subsequently, the nonribosomal peptide synthase apmB activates the same substrates as does apmA (phenylalanine and benzoic acid) to produce N-benzoylphenylalanine before condensing N-benzoylphenylalanine and N-benzoylphenylalaninol to release asperphenamate. The sequence is that of N-benzoylphenylalaninol synthetase apmA from Penicillium brevicompactum.